The chain runs to 342 residues: uncharacterized protein (342 aa).

It belongs to the bacterial luciferase oxidoreductase family.

This is an uncharacterized protein from Sinorhizobium fredii (strain NBRC 101917 / NGR234).